Reading from the N-terminus, the 258-residue chain is 5'-nucleotidase SurE (258 aa).

A divalent metal cation contacts are provided by D10, D11, S41, and N96.

This sequence belongs to the SurE nucleotidase family. A divalent metal cation serves as cofactor.

It localises to the cytoplasm. It carries out the reaction a ribonucleoside 5'-phosphate + H2O = a ribonucleoside + phosphate. Functionally, nucleotidase that shows phosphatase activity on nucleoside 5'-monophosphates. This is 5'-nucleotidase SurE from Sorangium cellulosum (strain So ce56) (Polyangium cellulosum (strain So ce56)).